The following is a 341-amino-acid chain: Retinol dehydrogenase 10 (341 aa).

The helical; Signal-anchor transmembrane segment at Ile-3 to Ala-23 threads the bilayer. Leu-40–Val-64 lines the NADP(+) pocket. A substrate-binding site is contributed by Ser-197. Catalysis depends on Tyr-210, which acts as the Proton acceptor.

This sequence belongs to the short-chain dehydrogenases/reductases (SDR) family.

The protein resides in the microsome membrane. It is found in the endoplasmic reticulum membrane. It catalyses the reaction all-trans-retinol + NADP(+) = all-trans-retinal + NADPH + H(+). Its pathway is cofactor metabolism; retinol metabolism. Its function is as follows. Retinol dehydrogenase with a clear preference for NADP. Converts all-trans-retinol to all-trans-retinal. Has no detectable activity towards 11-cis-retinol, 9-cis-retinol and 13-cis-retinol. The chain is Retinol dehydrogenase 10 (rdh10) from Xenopus tropicalis (Western clawed frog).